A 333-amino-acid chain; its full sequence is Adenosine deaminase (333 aa).

Residues histidine 12 and histidine 14 each coordinate Zn(2+). Residues histidine 14, aspartate 16, and glycine 170 each contribute to the substrate site. Histidine 197 provides a ligand contact to Zn(2+). The active-site Proton donor is glutamate 200. Aspartate 278 provides a ligand contact to Zn(2+). Substrate is bound at residue aspartate 279.

It belongs to the metallo-dependent hydrolases superfamily. Adenosine and AMP deaminases family. Adenosine deaminase subfamily. The cofactor is Zn(2+).

It catalyses the reaction adenosine + H2O + H(+) = inosine + NH4(+). The catalysed reaction is 2'-deoxyadenosine + H2O + H(+) = 2'-deoxyinosine + NH4(+). Its function is as follows. Catalyzes the hydrolytic deamination of adenosine and 2-deoxyadenosine. This is Adenosine deaminase from Aliivibrio fischeri (strain ATCC 700601 / ES114) (Vibrio fischeri).